A 269-amino-acid chain; its full sequence is UPF0329 protein ECU04_1660 (269 aa).

Positions 1–12 are enriched in basic and acidic residues; that stretch reads MEERERGKEKGS. The segment at 1-74 is disordered; that stretch reads MEERERGKEK…SPKEKSKGEE (74 aa). The segment covering 13 to 23 has biased composition (basic residues); it reads KGKGRKKRGKK. Basic and acidic residues predominate over residues 24–36; sequence GAGEAKEESKEED. The span at 37–51 shows a compositional bias: acidic residues; sequence RGEEEEESVEADVPV.

This sequence belongs to the UPF0329 family.

The polypeptide is UPF0329 protein ECU04_1660 (Encephalitozoon cuniculi (strain GB-M1) (Microsporidian parasite)).